The sequence spans 414 residues: Histidinol dehydrogenase (414 aa).

Positions 116, 177, and 200 each coordinate NAD(+). 3 residues coordinate substrate: T223, Q245, and H248. Residues Q245 and H248 each coordinate Zn(2+). Residues E313 and H314 each act as proton acceptor in the active site. Residues H314, D347, E401, and H406 each coordinate substrate. Position 347 (D347) interacts with Zn(2+). Position 406 (H406) interacts with Zn(2+).

This sequence belongs to the histidinol dehydrogenase family. Requires Zn(2+) as cofactor.

The catalysed reaction is L-histidinol + 2 NAD(+) + H2O = L-histidine + 2 NADH + 3 H(+). It functions in the pathway amino-acid biosynthesis; L-histidine biosynthesis; L-histidine from 5-phospho-alpha-D-ribose 1-diphosphate: step 9/9. Functionally, catalyzes the sequential NAD-dependent oxidations of L-histidinol to L-histidinaldehyde and then to L-histidine. In Staphylococcus epidermidis (strain ATCC 35984 / DSM 28319 / BCRC 17069 / CCUG 31568 / BM 3577 / RP62A), this protein is Histidinol dehydrogenase.